The primary structure comprises 159 residues: NADH-quinone oxidoreductase subunit I (159 aa).

4Fe-4S ferredoxin-type domains lie at 51–80 (RRYE…IEAD) and 90–119 (TRYD…EGPN). [4Fe-4S] cluster contacts are provided by Cys-60, Cys-63, Cys-66, Cys-70, Cys-99, Cys-102, Cys-105, and Cys-109.

Belongs to the complex I 23 kDa subunit family. As to quaternary structure, NDH-1 is composed of 14 different subunits. Subunits NuoA, H, J, K, L, M, N constitute the membrane sector of the complex. [4Fe-4S] cluster serves as cofactor.

Its subcellular location is the cell inner membrane. It carries out the reaction a quinone + NADH + 5 H(+)(in) = a quinol + NAD(+) + 4 H(+)(out). Its function is as follows. NDH-1 shuttles electrons from NADH, via FMN and iron-sulfur (Fe-S) centers, to quinones in the respiratory chain. The immediate electron acceptor for the enzyme in this species is believed to be ubiquinone. Couples the redox reaction to proton translocation (for every two electrons transferred, four hydrogen ions are translocated across the cytoplasmic membrane), and thus conserves the redox energy in a proton gradient. The polypeptide is NADH-quinone oxidoreductase subunit I (Rickettsia rickettsii (strain Sheila Smith)).